Reading from the N-terminus, the 335-residue chain is E3 ubiquitin-protein ligase NLA (335 aa).

Positions 1–154 (MKFCKKYEEY…ESRQGQAFKT (154 aa)) constitute an SPX domain. Residues 231–280 (CSICLDTVFDPISLTCGHIYCYMCACSAASVNVVDGLKTAEATEKCPLCR) form an RING-type zinc finger.

In terms of assembly, interacts with UBC8. Interacts with PHT1-1 and PHT1-4. Forms homodimers (via RING domain). Interacts with UBC24/PHO2. Interacts with NPF2.13/NRT1.7. Interacts with NAC92/ORE1. In terms of tissue distribution, high expression in roots and stems, medium in seedlings, flowers, rosette and cauline leaves, and very low in siliques. Detected in cotyledons, hypocotyls, pedicel, receptacle, pistil, sepal, filament of stamen and at the two ends of developing siliques.

Its subcellular location is the nucleus speckle. The protein resides in the nucleus. It is found in the cell membrane. The catalysed reaction is S-ubiquitinyl-[E2 ubiquitin-conjugating enzyme]-L-cysteine + [acceptor protein]-L-lysine = [E2 ubiquitin-conjugating enzyme]-L-cysteine + N(6)-ubiquitinyl-[acceptor protein]-L-lysine.. The protein operates within protein modification; protein ubiquitination. E3 ubiquitin-protein ligase that mediates E2-dependent protein ubiquitination. Plays a role in salicylic acid-mediated negative feedback regulation of salicylic acid (SA) accumulation. May be involved in the overall regulation of SA, benzoic acid and phenylpropanoid biosynthesis. Involved in defense response. May act as negative regulator of resistance to the necrotrophic fungal pathogen Plectosphaerella cucumerina by modulating the accumulation of the phytoalexin camalexin and the salicylic acid- and jasmonate- dependent defense pathways. Controls the adaptability to nitrogen limitation by channeling the phenylpropanoid metabolic flux to the induced anthocyanin synthesis. Involved in the regulation of inorganic phosphate (Pi) homeostasis in a nitrate-dependent fashion. Directs the ubiquitination and subsequent degradation of the plasma membrane-localized inorganic phosphate transporters PHT1-1 and PHT1-4, to maintain phosphate homeostasis. The ubiquitination of PHTs triggers their clathrin-dependent endocytosis and trafficking to the vacuole through the endosomal pathway for degradation. Functions cooperatively with UBC24/PHO2 to regulate the abundance of PHT1-1, PHT1-2 and PHT1-3 in different subcellular compartments. Regulates Pi homeostasis by mediating, cooperatively with UBC24/PHO2, polyubiquitination of PHT1-4 and its targeting for degradation. Directs the polyubiquitination and subsequent degradation of the plasma membrane-localized nitrate transporter NPF2.13/NRT1.7, to help plants to adapt to nitrogen deficiency by regulating the source-to-sink remobilization of nitrate. Regulates leaf senescence during nitrogen deficiency by mediating, cooperatively with UBC24/PHO2, polyubiquitination of NAC92/ORE1 and its targeting for degradation. In Arabidopsis thaliana (Mouse-ear cress), this protein is E3 ubiquitin-protein ligase NLA.